A 173-amino-acid chain; its full sequence is Probable DNA-directed RNA polymerase subunit delta (173 aa).

Residues 14 to 81 (NSFIDLAYMA…GEYMWGLRDW (68 aa)) enclose the HTH HARE-type domain. Positions 113–173 (LLGEDEVEDE…DEFDDEEEEE (61 aa)) are disordered. The span at 115–173 (GEDEVEDELDLLPSDGDEENVDTEDEEVEDELDEAGLVVEPDEEFEDEEDEFDDEEEEE) shows a compositional bias: acidic residues.

This sequence belongs to the RpoE family. As to quaternary structure, RNAP is composed of a core of 2 alpha, a beta and a beta' subunits. The core is associated with a delta subunit and one of several sigma factors.

In terms of biological role, participates in both the initiation and recycling phases of transcription. In the presence of the delta subunit, RNAP displays an increased specificity of transcription, a decreased affinity for nucleic acids, and an increased efficiency of RNA synthesis because of enhanced recycling. The sequence is that of Probable DNA-directed RNA polymerase subunit delta from Macrococcus caseolyticus (strain JCSC5402) (Macrococcoides caseolyticum).